The chain runs to 389 residues: S-adenosylmethionine synthase (389 aa).

Histidine 15 contacts ATP. Aspartate 17 contacts Mg(2+). Glutamate 43 contributes to the K(+) binding site. Residues glutamate 56 and glutamine 99 each coordinate L-methionine. The flexible loop stretch occupies residues 99 to 109; sequence QSPDIAQGVNE. Residues 166 to 168, 234 to 235, aspartate 243, 249 to 250, alanine 266, and lysine 270 contribute to the ATP site; these read DAK, RF, and RK. L-methionine is bound at residue aspartate 243. Lysine 274 serves as a coordination point for L-methionine.

It belongs to the AdoMet synthase family. As to quaternary structure, homotetramer; dimer of dimers. Mg(2+) is required as a cofactor. Requires K(+) as cofactor.

The protein resides in the cytoplasm. The enzyme catalyses L-methionine + ATP + H2O = S-adenosyl-L-methionine + phosphate + diphosphate. It functions in the pathway amino-acid biosynthesis; S-adenosyl-L-methionine biosynthesis; S-adenosyl-L-methionine from L-methionine: step 1/1. Functionally, catalyzes the formation of S-adenosylmethionine (AdoMet) from methionine and ATP. The overall synthetic reaction is composed of two sequential steps, AdoMet formation and the subsequent tripolyphosphate hydrolysis which occurs prior to release of AdoMet from the enzyme. The sequence is that of S-adenosylmethionine synthase from Chromobacterium violaceum (strain ATCC 12472 / DSM 30191 / JCM 1249 / CCUG 213 / NBRC 12614 / NCIMB 9131 / NCTC 9757 / MK).